Consider the following 426-residue polypeptide: Serine--tRNA ligase (426 aa).

Residue 231–233 (TAE) participates in L-serine binding. Residue 262–264 (RSE) participates in ATP binding. L-serine is bound at residue Glu-285. 349–352 (EISS) is an ATP binding site. Position 385 (Ser-385) interacts with L-serine.

Belongs to the class-II aminoacyl-tRNA synthetase family. Type-1 seryl-tRNA synthetase subfamily. Homodimer. The tRNA molecule binds across the dimer.

The protein localises to the cytoplasm. The enzyme catalyses tRNA(Ser) + L-serine + ATP = L-seryl-tRNA(Ser) + AMP + diphosphate + H(+). The catalysed reaction is tRNA(Sec) + L-serine + ATP = L-seryl-tRNA(Sec) + AMP + diphosphate + H(+). The protein operates within aminoacyl-tRNA biosynthesis; selenocysteinyl-tRNA(Sec) biosynthesis; L-seryl-tRNA(Sec) from L-serine and tRNA(Sec): step 1/1. Its function is as follows. Catalyzes the attachment of serine to tRNA(Ser). Is also able to aminoacylate tRNA(Sec) with serine, to form the misacylated tRNA L-seryl-tRNA(Sec), which will be further converted into selenocysteinyl-tRNA(Sec). The chain is Serine--tRNA ligase from Teredinibacter turnerae (strain ATCC 39867 / T7901).